The following is a 204-amino-acid chain: Pyridoxamine 5'-phosphate oxidase YLR456W homolog (204 aa).

Residues 65–66 (FT) and Asn127 each bind FMN.

The protein belongs to the pyridoxamine 5'-phosphate oxidase family. The cofactor is FMN.

The protein localises to the cytoplasm. Its subcellular location is the nucleus. In Saccharomyces cerevisiae (strain ATCC 204508 / S288c) (Baker's yeast), this protein is Pyridoxamine 5'-phosphate oxidase YLR456W homolog.